A 420-amino-acid chain; its full sequence is 2',3'-cyclic-nucleotide 3'-phosphodiesterase (420 aa).

S9 is modified (phosphoserine). Residue Y110 is modified to Phosphotyrosine. Phosphoserine is present on residues S169, S227, and S239. The active-site Proton acceptor is the H250. Residue T252 coordinates substrate. Residue H329 is the Proton donor of the active site. T331 lines the substrate pocket. Phosphoserine is present on S358. Cysteine methyl ester is present on C417. A lipid anchor (S-farnesyl cysteine) is attached at C417. A propeptide spans 418 to 420 (TII) (removed in mature form).

The protein belongs to the 2H phosphoesterase superfamily. CNPase family. As to quaternary structure, exists as monomers and homodimers.

Its subcellular location is the membrane. It is found in the melanosome. The catalysed reaction is a nucleoside 2',3'-cyclic phosphate + H2O = a nucleoside 2'-phosphate + H(+). Functionally, catalyzes the formation of 2'-nucleotide products from 2',3'-cyclic substrates. May participate in RNA metabolism in the myelinating cell, CNP is the third most abundant protein in central nervous system myelin. The sequence is that of 2',3'-cyclic-nucleotide 3'-phosphodiesterase from Mus musculus (Mouse).